A 496-amino-acid chain; its full sequence is Glutamyl-tRNA(Gln) amidotransferase subunit A (496 aa).

Active-site charge relay system residues include K75 and S150. The Acyl-ester intermediate role is filled by S174.

It belongs to the amidase family. GatA subfamily. Heterotrimer of A, B and C subunits.

The enzyme catalyses L-glutamyl-tRNA(Gln) + L-glutamine + ATP + H2O = L-glutaminyl-tRNA(Gln) + L-glutamate + ADP + phosphate + H(+). Its function is as follows. Allows the formation of correctly charged Gln-tRNA(Gln) through the transamidation of misacylated Glu-tRNA(Gln) in organisms which lack glutaminyl-tRNA synthetase. The reaction takes place in the presence of glutamine and ATP through an activated gamma-phospho-Glu-tRNA(Gln). This is Glutamyl-tRNA(Gln) amidotransferase subunit A from Burkholderia pseudomallei (strain 1106a).